We begin with the raw amino-acid sequence, 365 residues long: Chorismate synthase (365 aa).

R47 contacts NADP(+). FMN contacts are provided by residues 124–126 (RAS), G287, 302–306 (KPTAT), and R328.

It belongs to the chorismate synthase family. As to quaternary structure, homotetramer. Requires FMNH2 as cofactor.

The enzyme catalyses 5-O-(1-carboxyvinyl)-3-phosphoshikimate = chorismate + phosphate. The protein operates within metabolic intermediate biosynthesis; chorismate biosynthesis; chorismate from D-erythrose 4-phosphate and phosphoenolpyruvate: step 7/7. In terms of biological role, catalyzes the anti-1,4-elimination of the C-3 phosphate and the C-6 proR hydrogen from 5-enolpyruvylshikimate-3-phosphate (EPSP) to yield chorismate, which is the branch point compound that serves as the starting substrate for the three terminal pathways of aromatic amino acid biosynthesis. This reaction introduces a second double bond into the aromatic ring system. The chain is Chorismate synthase from Prochlorococcus marinus (strain MIT 9312).